The sequence spans 322 residues: MARCFSLVLLLTSIWTTRLLVQGSLRAEELSIQVSCRIMGITLVSKKANQQLNFTEAKEACRLLGLSLAGKDQVETALKASFETCSYGWVGDGFVVISRISPNPKCGKNGVGVLIWKVPVSRQFAAYCYNSSDTWTNSCIPEIITTKDPIFNTQTATQTTEFIVSDSTYSVASPYSTIPAPTTTPPAPASTSIPRRKKLICVTEVFMETSTMSTETEPFVENKAAFKNEAAGFGGVPTALLVLALLFFGAAAGLGFCYVKRYVKAFPFTNKNQQKEMIETKVVKEEKANDSNPNEESKKTDKNPEESKSPSKTTVRCLEAEV.

Positions Met1–Leu19 are cleaved as a signal peptide. Residues Leu20–Thr238 lie on the Extracellular side of the membrane. The Link domain occupies Gly40–Asn130. N-linked (GlcNAc...) asparagine glycosylation is present at Asn53. 2 cysteine pairs are disulfide-bonded: Cys61–Cys128 and Cys85–Cys106. An N-linked (GlcNAc...) asparagine glycan is attached at Asn130. A helical transmembrane segment spans residues Ala239–Val259. Over Lys260–Val322 the chain is Cytoplasmic. Positions Glu279–Ser309 are enriched in basic and acidic residues. Residues Glu279–Val322 form a disordered region.

In terms of assembly, homodimer; disulfide-linked. Interacts with PDGFB and IGFBP3. Forms a transient ternary complex with PDGFB and PDGFRB in TGN. In terms of processing, O-glycosylated. Mainly expressed in endothelial cells lining lymphatic vessels.

It is found in the cell membrane. In terms of biological role, ligand-specific transporter trafficking between intracellular organelles (TGN) and the plasma membrane. Plays a role in autocrine regulation of cell growth mediated by growth regulators containing cell surface retention sequence binding (CRS). May act as a hyaluronan (HA) transporter, either mediating its uptake for catabolism within lymphatic endothelial cells themselves, or its transport into the lumen of afferent lymphatic vessels for subsequent re-uptake and degradation in lymph nodes. Binds to pericelluar hyaluronan matrices deposited on the surface of leukocytes and facilitates cell adhesion and migration through lymphatic endothelium. This Homo sapiens (Human) protein is Lymphatic vessel endothelial hyaluronic acid receptor 1 (LYVE1).